The primary structure comprises 150 residues: Large ribosomal subunit protein uL22c (150 aa).

Belongs to the universal ribosomal protein uL22 family. Part of the 50S ribosomal subunit.

The protein localises to the plastid. The protein resides in the chloroplast. Its function is as follows. This protein binds specifically to 23S rRNA. In terms of biological role, the globular domain of the protein is located near the polypeptide exit tunnel on the outside of the subunit, while an extended beta-hairpin is found that lines the wall of the exit tunnel in the center of the 70S ribosome. This chain is Large ribosomal subunit protein uL22c (rpl22), found in Fagopyrum esculentum subsp. ancestrale (Wild buckwheat).